Here is a 112-residue protein sequence, read N- to C-terminus: Iron-sulfur cluster assembly protein CyaY (112 aa).

The protein belongs to the frataxin family.

In terms of biological role, involved in iron-sulfur (Fe-S) cluster assembly. May act as a regulator of Fe-S biogenesis. In Janthinobacterium sp. (strain Marseille) (Minibacterium massiliensis), this protein is Iron-sulfur cluster assembly protein CyaY.